The following is a 109-amino-acid chain: Gliadoralin-A (109 aa).

An N-terminal signal peptide occupies residues 1–16 (MLVILLMVVVLALSSA). A Pyrrolidone carboxylic acid modification is found at Gln17. A disordered region spans residues 17-109 (QDPNRDFVVS…PRYQQPRRAV (93 aa)). Positions 35–109 (PSSQQGTVGG…PRYQQPRRAV (75 aa)) are enriched in low complexity. A propeptide spanning residues 107–109 (RAV) is cleaved from the precursor.

In terms of processing, predominantly proteolytically processed at its C-terminus before secretion to produce the major form gliadoralin A 1-90. Further proteloytically processed after secretion to produce minor forms. Potential substrate of transglutaminase. In terms of tissue distribution, found in saliva (at protein level). Secreted from the submandibular gland.

The protein resides in the secreted. Functionally, may play a role in the formation of the protective mucosal protein pellicle involved in the reinforcement and protection of oral mucosal epithelial surface. In Rattus norvegicus (Rat), this protein is Gliadoralin-A.